The primary structure comprises 152 residues: Probable ribose-5-phosphate isomerase B (152 aa).

Asp12–His13 is a D-ribulose 5-phosphate binding site. Residue Cys70 is the Proton acceptor of the active site. A D-ribulose 5-phosphate-binding site is contributed by Gly71–Gly75. His103 acts as the Proton donor in catalysis. D-ribulose 5-phosphate-binding residues include Asp104, Arg114, Arg137, and Arg141.

This sequence belongs to the LacAB/RpiB family. Homodimer.

The enzyme catalyses aldehydo-D-ribose 5-phosphate = D-ribulose 5-phosphate. It participates in carbohydrate degradation; pentose phosphate pathway; D-ribose 5-phosphate from D-ribulose 5-phosphate (non-oxidative stage): step 1/1. In terms of biological role, catalyzes the interconversion of ribulose-5-P and ribose-5-P. This Mycoplasma pneumoniae (strain ATCC 29342 / M129 / Subtype 1) (Mycoplasmoides pneumoniae) protein is Probable ribose-5-phosphate isomerase B.